Reading from the N-terminus, the 187-residue chain is MGCCGCSGGCGSGCGGCGSGCGGCGSSCCVPICCCKPVCCCVPACSCSSCGSCGGSKGGRGSCGGSKGDCGSCGGSKGGCGSCGCSQCSCYKPCCCSSGCGSSCCQSSCCKPCCSQSSCCKPCSCSSGCGSSCCQSSCCKPCCSQSSCCKPCCCSSGCGSSCCQSSCCKPCCSQSSCCVPICCQCKI.

9 repeat units span residues 28-31 (CCVP), 34-37 (CCKP), 40-43 (CCVP), 109-112 (CCKP), 119-122 (CCKP), 138-141 (CCKP), 148-151 (CCKP), 167-170 (CCKP), and 177-180 (CCVP). The tract at residues 28–180 (CCVPICCCKP…CCSQSSCCVP (153 aa)) is 9 X 4 AA repeats of C-C-X-P.

It belongs to the KRTAP type 5 family. Restricted to hair root, not detected in any other tissues. Expressed in cuticle layers of differentiating hair follicles.

Its function is as follows. In the hair cortex, hair keratin intermediate filaments are embedded in an interfilamentous matrix, consisting of hair keratin-associated protein (KRTAP), which are essential for the formation of a rigid and resistant hair shaft through their extensive disulfide bond cross-linking with abundant cysteine residues of hair keratins. The matrix proteins include the high-sulfur and high-glycine-tyrosine keratins. The protein is Keratin-associated protein 5-8 (KRTAP5-8) of Homo sapiens (Human).